The sequence spans 535 residues: NEDD8-activating enzyme E1 regulatory subunit (535 aa).

The segment at 332–345 (DMIADSSKFIKLQN) is interaction with UBA3.

It belongs to the ubiquitin-activating E1 family. ULA1 subfamily. Heterodimer of UBA3 and NAE1. The complex binds NEDD8 and UBE2M.

Its pathway is protein modification; protein neddylation. Functionally, regulatory subunit of the dimeric UBA3-NAE1 E1 enzyme. E1 activates NEDD8 by first adenylating its C-terminal glycine residue with ATP, thereafter linking this residue to the side chain of the catalytic cysteine, yielding a NEDD8-UBA3 thioester and free AMP. E1 finally transfers NEDD8 to the catalytic cysteine of UBE2M. The covalent attachment of NEDD8 to target proteins is known as 'neddylation' and the process is involved in the regulation of cell growth, viability and development. This is NEDD8-activating enzyme E1 regulatory subunit (NAE1) from Gallus gallus (Chicken).